Consider the following 311-residue polypeptide: MSLRIIFMGTPDFSVPTLRALVEAGHEIVAVYTQPPRPGGRRGLDLQKSPVHQVAELLGLPVLTPVNFKAEEDRQQFRDFNADVAVVVAYGLLLPEAILSGTRLGCYNGHASLLPRWRGAAPIQRAIMAGDAETGMMVMKMEKGLDTGPVALTAKVAIDENMTAGELHDSLMLAGARLMRQAMAKLEADDLPLVTQAEEGVLYAAKIDKGETRIDFSRPAQDVHNHIRGLSPFPGAWLEMDIGGKPERVKVLASELASGMGEAGSALDDALTIACGSDAVRLTRLQKAGGKPMSAADFVRGTPVPATTRLG.

Ser-112 to Pro-115 contacts (6S)-5,6,7,8-tetrahydrofolate.

Belongs to the Fmt family.

It carries out the reaction L-methionyl-tRNA(fMet) + (6R)-10-formyltetrahydrofolate = N-formyl-L-methionyl-tRNA(fMet) + (6S)-5,6,7,8-tetrahydrofolate + H(+). Its function is as follows. Attaches a formyl group to the free amino group of methionyl-tRNA(fMet). The formyl group appears to play a dual role in the initiator identity of N-formylmethionyl-tRNA by promoting its recognition by IF2 and preventing the misappropriation of this tRNA by the elongation apparatus. This chain is Methionyl-tRNA formyltransferase, found in Agrobacterium fabrum (strain C58 / ATCC 33970) (Agrobacterium tumefaciens (strain C58)).